A 952-amino-acid chain; its full sequence is Anion exchange protein 4 (952 aa).

The tract at residues 1-41 (MKLPGQGDFESSDAHENAHSEEPDSGLGPGPGLNGPSGIDI) is disordered. The span at 12–22 (SDAHENAHSEE) shows a compositional bias: basic and acidic residues. A run of 4 helical transmembrane segments spans residues 385–405 (AVFY…GLLG), 413–433 (GVLE…LMAG), 470–490 (VGIW…SLLV), and 501–521 (FCAL…LNLI). N-linked (GlcNAc...) asparagine glycosylation is found at Asn546 and Asn569. Helical transmembrane passes span 593–613 (VPDI…CAIA), 634–654 (FSSV…GLAT), 681–701 (PWWL…LIFM), 727–747 (LFCV…WYVS), 784–804 (GLVV…LKFI), 807–827 (PVLY…IQFV), and 870–890 (VVKS…LVAI). The segment at 915–938 (ETIPENRSEPEHLFSGNDSEDSEL) is disordered. 3 N-linked (GlcNAc...) asparagine glycosylation sites follow: Asn920, Asn931, and Asn948.

This sequence belongs to the anion exchanger (TC 2.A.31) family. Expressed in submandibular gland (SMG) duct and cortical collecting duct (CCD) of kidney. Lower expressed in duodenal villi.

The protein resides in the basolateral cell membrane. The catalysed reaction is 2 hydrogencarbonate(out) + chloride(in) + Na(+)(out) = 2 hydrogencarbonate(in) + chloride(out) + Na(+)(in). It carries out the reaction K(+)(in) + 2 hydrogencarbonate(in) + chloride(out) = K(+)(out) + 2 hydrogencarbonate(out) + chloride(in). It catalyses the reaction Li(+)(in) + 2 hydrogencarbonate(in) + chloride(out) = Li(+)(out) + 2 hydrogencarbonate(out) + chloride(in). The enzyme catalyses Rb(+)(in) + 2 hydrogencarbonate(in) + chloride(out) = Rb(+)(out) + 2 hydrogencarbonate(out) + chloride(in). The catalysed reaction is Cs(+)(in) + 2 hydrogencarbonate(in) + chloride(out) = Cs(+)(out) + 2 hydrogencarbonate(out) + chloride(in). Its activity is regulated as follows. Cl(-)/HCO3(-) exchanger activity is substantially increased in response to 5 uM isoproterenol. Cl(-)/HCO3(-) exchanger activity is increased by both forskolin and coexpression with the catalytic subunit alpha of PKA. Its function is as follows. Electroneutral Cl(-)/HCO3(-) antiporter that favors chloride ion entry and efflux of hydrogencarbonate and sodium ion across the basolateral membrane and may participate in salivary secretion. Also mediates Cl(-)/HCO3(-) exchange activity in the presence of K(+) as well as Cs(+), Li(+), and Rb(+). Does not contribute to Cl(-)/HCO3(-) exchanger in the apical membrane of the upper villous epithelium. In Mus musculus (Mouse), this protein is Anion exchange protein 4.